The primary structure comprises 351 residues: Photosystem II D2 protein (351 aa).

A helical membrane pass occupies residues 39–59; sequence CAFLALGGWLTGTTFVTSWYT. Residue histidine 116 coordinates chlorophyll a. The helical transmembrane segment at 123-139 threads the bilayer; sequence GFMLRQFEIARLVGIRP. Pheophytin a-binding residues include glutamine 128 and asparagine 141. A helical transmembrane segment spans residues 151 to 164; the sequence is VFVSVFLMYPLGQS. Histidine 196 provides a ligand contact to chlorophyll a. A helical transmembrane segment spans residues 206–226; the sequence is GALLCAIHGATVENTLFEDGE. 2 residues coordinate a plastoquinone: histidine 213 and phenylalanine 260. Histidine 213 provides a ligand contact to Fe cation. A Fe cation-binding site is contributed by histidine 267. The chain crosses the membrane as a helical span at residues 277-293; it reads GLWMSAVGIVGLALNLR.

The protein belongs to the reaction center PufL/M/PsbA/D family. As to quaternary structure, PSII is composed of 1 copy each of membrane proteins PsbA, PsbB, PsbC, PsbD, PsbE, PsbF, PsbH, PsbI, PsbJ, PsbK, PsbL, PsbM, PsbT, PsbX, PsbY, PsbZ, Psb30/Ycf12, peripheral proteins PsbO, CyanoQ (PsbQ), PsbU, PsbV and a large number of cofactors. It forms dimeric complexes. The D1/D2 heterodimer binds P680, chlorophylls that are the primary electron donor of PSII, and subsequent electron acceptors. It shares a non-heme iron and each subunit binds pheophytin, quinone, additional chlorophylls, carotenoids and lipids. There is also a Cl(-1) ion associated with D1 and D2, which is required for oxygen evolution. The PSII complex binds additional chlorophylls, carotenoids and specific lipids. is required as a cofactor.

The protein localises to the cellular thylakoid membrane. The enzyme catalyses 2 a plastoquinone + 4 hnu + 2 H2O = 2 a plastoquinol + O2. Functionally, photosystem II (PSII) is a light-driven water:plastoquinone oxidoreductase that uses light energy to abstract electrons from H(2)O, generating O(2) and a proton gradient subsequently used for ATP formation. It consists of a core antenna complex that captures photons, and an electron transfer chain that converts photonic excitation into a charge separation. The D1/D2 (PsbA/PsbD) reaction center heterodimer binds P680, the primary electron donor of PSII as well as several subsequent electron acceptors. D2 is needed for assembly of a stable PSII complex. This Trichormus variabilis (strain ATCC 29413 / PCC 7937) (Anabaena variabilis) protein is Photosystem II D2 protein.